Consider the following 1222-residue polypeptide: ATP-dependent helicase/nuclease subunit A (1222 aa).

Residues 39–495 enclose the UvrD-like helicase ATP-binding domain; the sequence is QKRTAQQIEA…ILLKENFRSQ (457 aa). Residue 60-67 coordinates ATP; that stretch reads ASAGSGKT. The 287-residue stretch at 524–810 folds into the UvrD-like helicase C-terminal domain; sequence QLIAGSHAQT…NLMTIHKSKG (287 aa).

This sequence belongs to the helicase family. AddA subfamily. In terms of assembly, heterodimer of AddA and AddB/RexB. The cofactor is Mg(2+).

It carries out the reaction Couples ATP hydrolysis with the unwinding of duplex DNA by translocating in the 3'-5' direction.. The catalysed reaction is ATP + H2O = ADP + phosphate + H(+). Its function is as follows. The heterodimer acts as both an ATP-dependent DNA helicase and an ATP-dependent, dual-direction single-stranded exonuclease. Recognizes the chi site generating a DNA molecule suitable for the initiation of homologous recombination. The AddA nuclease domain is required for chi fragment generation; this subunit has the helicase and 3' -&gt; 5' nuclease activities. In Streptococcus pyogenes serotype M18 (strain MGAS8232), this protein is ATP-dependent helicase/nuclease subunit A.